The chain runs to 473 residues: Fumarate hydratase class II 2 (473 aa).

The segment at methionine 1 to serine 28 is disordered. Substrate contacts are provided by residues serine 108–threonine 110, histidine 139–aspartate 142, serine 149–asparagine 151, and threonine 197. Residue histidine 198 is the Proton donor/acceptor of the active site. The active site involves serine 328. Residues serine 329 and lysine 334–asparagine 336 each bind substrate.

Belongs to the class-II fumarase/aspartase family. Fumarase subfamily. In terms of assembly, homotetramer.

The protein resides in the cytoplasm. It catalyses the reaction (S)-malate = fumarate + H2O. It functions in the pathway carbohydrate metabolism; tricarboxylic acid cycle; (S)-malate from fumarate: step 1/1. In terms of biological role, involved in the TCA cycle. Catalyzes the stereospecific interconversion of fumarate to L-malate. The chain is Fumarate hydratase class II 2 from Bradyrhizobium diazoefficiens (strain JCM 10833 / BCRC 13528 / IAM 13628 / NBRC 14792 / USDA 110).